A 375-amino-acid chain; its full sequence is MIIKTLLASVAIMLIATVNAEYNVAKYCELVKIGTLMPSMISCQDYYICRLNNQPIPVKCGANTVFDKDTQGCVPEAQANCILSLDNPCENKDRTFAPSSKACNEWHYCLNGNIVANGSCQPGQIFDASKNSCIYGACNSDDDDSNSDFTPVLNICDIMQNGQFFGDFENCQNWQKCNNGRLQKGICLGNLVYDTKNGMCLQNDGTMCERTNGMVSEDGGAPDETLCTSSNDGPLPDKLTCSVYYICEQDTTSTPTTYKWIKTSCPNGQYFDVFGDGCLDRAKRRVYTGCNRCEYTTGSTTYWVNAVSNDCTKFSTCRNGRKITNEDGSCNSGYYFNEADQYCNMGDFTNYAETNGACQNYSCNGYDCTTKPSAT.

The N-terminal stretch at 1-20 (MIIKTLLASVAIMLIATVNA) is a signal peptide. Chitin-binding type-2 domains follow at residues 25–83 (AKYC…NCIL), 86–143 (DNPC…SDDD), 153–210 (LNIC…MCER), 224–292 (ETLC…GCNR), and 294–360 (EYTT…ACQN). Cysteines 60 and 73 form a disulfide. Asn117 is a glycosylation site (N-linked (GlcNAc...) asparagine). Disulfide bonds link Cys120/Cys133, Cys187/Cys200, Cys265/Cys278, and Cys330/Cys343. N-linked (GlcNAc...) asparagine glycosylation is present at Asn360.

Post-translationally, glycosylated. Cardia and midgut peritrophic membrane.

Its function is as follows. May bind chitin or related oligosaccharide structures. The polypeptide is Peritrophin-48 (Lucilia cuprina (Green bottle fly)).